Consider the following 292-residue polypeptide: Putative ribonuclease 3 (292 aa).

Residues 32–158 (LGMSDEYIPY…FFGATEWLID (127 aa)) form the RNase III domain. Residues 204–276 (DAKTRFNEVI…ASRALETLAL (73 aa)) form the DRBM domain.

The protein belongs to the IIV-6 142R family.

The catalysed reaction is Endonucleolytic cleavage to 5'-phosphomonoester.. In terms of biological role, digests double-stranded RNA. The sequence is that of Putative ribonuclease 3 from Acheta domesticus (House cricket).